A 131-amino-acid chain; its full sequence is Leptin receptor gene-related protein (131 aa).

4 helical membrane-spanning segments follow: residues 7 to 27 (LVAL…GCAL), 32 to 52 (VYWP…YFIA), 69 to 89 (LAYF…VVLA), and 100 to 120 (GLVL…FLVF).

This sequence belongs to the OB-RGRP/VPS55 family. Interacts with LEPR. Interacts with RAB13. Widely distributed in the brain, with elevated expression in the hypothalamic regions, including the paraventricular nucleus. In the placenta, present at high levels in the junctional zone situated towards the maternal aspect and throughout the labyrinth zone in close proximity to the developing fetus.

The protein resides in the golgi apparatus membrane. It is found in the endosome membrane. Functionally, negatively regulates leptin receptor (LEPR) cell surface expression, and thus decreases response to leptin. Negatively regulates growth hormone (GH) receptor cell surface expression in liver. May play a role in liver resistance to GH during periods of reduced nutrient availability. The protein is Leptin receptor gene-related protein (Leprot) of Mus musculus (Mouse).